We begin with the raw amino-acid sequence, 63 residues long: Large ribosomal subunit protein uL29 (63 aa).

This sequence belongs to the universal ribosomal protein uL29 family.

The polypeptide is Large ribosomal subunit protein uL29 (Mannheimia succiniciproducens (strain KCTC 0769BP / MBEL55E)).